Reading from the N-terminus, the 212-residue chain is Probable nicotinate-nucleotide adenylyltransferase (212 aa).

The protein belongs to the NadD family.

It carries out the reaction nicotinate beta-D-ribonucleotide + ATP + H(+) = deamido-NAD(+) + diphosphate. The protein operates within cofactor biosynthesis; NAD(+) biosynthesis; deamido-NAD(+) from nicotinate D-ribonucleotide: step 1/1. In terms of biological role, catalyzes the reversible adenylation of nicotinate mononucleotide (NaMN) to nicotinic acid adenine dinucleotide (NaAD). In Saccharopolyspora erythraea (strain ATCC 11635 / DSM 40517 / JCM 4748 / NBRC 13426 / NCIMB 8594 / NRRL 2338), this protein is Probable nicotinate-nucleotide adenylyltransferase.